The following is a 443-amino-acid chain: Clustered-asparagine-rich protein (443 aa).

Positions 16–106 (TKLHIQNIPP…RNIDAKFAVP (91 aa)) constitute an RRM 1 domain. The tract at residues 253-279 (NHLNNNNNNINNNNNNNNNNNNNNNVM) is disordered. A compositionally biased stretch (low complexity) spans 256–277 (NNNNNNINNNNNNNNNNNNNNN). Positions 342–435 (SSITIMKKQN…KYLKVQLKKG (94 aa)) constitute an RRM 2 domain.

This chain is Clustered-asparagine-rich protein, found in Plasmodium falciparum.